Consider the following 91-residue polypeptide: Gem-associated protein 7 homolog (91 aa).

A Sm domain is found at 18–86 (LKFYQKMASA…VVGIEYNLVQ (69 aa)).

It belongs to the gemin-7 family. In terms of assembly, part of the core SMN complex at least composed of smn1, yip11/gem2, gem6, gem7 and gem8. Interacts with gem6; the interaction is direct. Interacts with gem8; the interaction is direct.

This chain is Gem-associated protein 7 homolog, found in Schizosaccharomyces pombe (strain 972 / ATCC 24843) (Fission yeast).